Here is a 238-residue protein sequence, read N- to C-terminus: 4-hydroxy-tetrahydrodipicolinate reductase (238 aa).

Gly12–Met17 is a binding site for NAD(+). An NADP(+)-binding site is contributed by Arg40. NAD(+) is bound by residues Gly93–Thr95 and Ala117–Phe120. Residue His149 is the Proton donor/acceptor of the active site. Residue His150 coordinates (S)-2,3,4,5-tetrahydrodipicolinate. Residue Lys153 is the Proton donor of the active site. A (S)-2,3,4,5-tetrahydrodipicolinate-binding site is contributed by Gly159–Thr160.

The protein belongs to the DapB family.

Its subcellular location is the cytoplasm. The catalysed reaction is (S)-2,3,4,5-tetrahydrodipicolinate + NAD(+) + H2O = (2S,4S)-4-hydroxy-2,3,4,5-tetrahydrodipicolinate + NADH + H(+). The enzyme catalyses (S)-2,3,4,5-tetrahydrodipicolinate + NADP(+) + H2O = (2S,4S)-4-hydroxy-2,3,4,5-tetrahydrodipicolinate + NADPH + H(+). Its pathway is amino-acid biosynthesis; L-lysine biosynthesis via DAP pathway; (S)-tetrahydrodipicolinate from L-aspartate: step 4/4. Its function is as follows. Catalyzes the conversion of 4-hydroxy-tetrahydrodipicolinate (HTPA) to tetrahydrodipicolinate. This chain is 4-hydroxy-tetrahydrodipicolinate reductase, found in Xanthomonas campestris pv. campestris (strain 8004).